A 397-amino-acid polypeptide reads, in one-letter code: S-adenosylmethionine synthase (397 aa).

Residue histidine 17 coordinates ATP. Position 19 (aspartate 19) interacts with Mg(2+). Glutamate 45 is a K(+) binding site. L-methionine contacts are provided by glutamate 58 and glutamine 101. The flexible loop stretch occupies residues 101-111 (QSPDIAQGVDK). ATP-binding positions include 176–178 (DGK), 243–244 (RF), aspartate 252, 258–259 (RK), and lysine 279. Residue aspartate 252 participates in L-methionine binding. Lysine 283 contributes to the L-methionine binding site.

This sequence belongs to the AdoMet synthase family. In terms of assembly, homotetramer; dimer of dimers. It depends on Mg(2+) as a cofactor. K(+) is required as a cofactor.

The protein resides in the cytoplasm. The enzyme catalyses L-methionine + ATP + H2O = S-adenosyl-L-methionine + phosphate + diphosphate. It functions in the pathway amino-acid biosynthesis; S-adenosyl-L-methionine biosynthesis; S-adenosyl-L-methionine from L-methionine: step 1/1. Its function is as follows. Catalyzes the formation of S-adenosylmethionine (AdoMet) from methionine and ATP. The overall synthetic reaction is composed of two sequential steps, AdoMet formation and the subsequent tripolyphosphate hydrolysis which occurs prior to release of AdoMet from the enzyme. This Staphylococcus aureus (strain USA300) protein is S-adenosylmethionine synthase.